The chain runs to 373 residues: WAT1-related protein At4g08300 (373 aa).

A run of 10 helical transmembrane segments spans residues proline 11–valine 31, isoleucine 41–leucine 61, proline 67–leucine 87, threonine 102–phenylalanine 122, isoleucine 139–isoleucine 159, tryptophan 185–leucine 205, leucine 219–valine 239, alanine 255–isoleucine 275, valine 281–valine 301, and isoleucine 306–tryptophan 326. 2 EamA domains span residues alanine 23–methionine 151 and threonine 198–valine 325.

This sequence belongs to the drug/metabolite transporter (DMT) superfamily. Plant drug/metabolite exporter (P-DME) (TC 2.A.7.4) family.

The protein resides in the membrane. In Arabidopsis thaliana (Mouse-ear cress), this protein is WAT1-related protein At4g08300.